We begin with the raw amino-acid sequence, 812 residues long: Fibroblast growth factor receptor 1 (812 aa).

The signal sequence occupies residues 1-20; that stretch reads MFSGMSLLLWGVLLGAALSV. Residues 21-371 are Extracellular-facing; that stretch reads ARPPSTLPDE…PALLASPLQL (351 aa). Residues 25 to 118 form the Ig-like C2-type 1 domain; the sequence is STLPDEVAPK…YTVLCSVNVS (94 aa). The cysteines at positions 54 and 100 are disulfide-linked. N-linked (GlcNAc...) asparagine glycosylation is found at N76, N116, N133, N223, N236, N260, N292, N313, and N326. Positions 121–153 are disordered; the sequence is LPSAEDDDEDDDNSSSEEKAAENSKPNRPLWSH. Acidic residues predominate over residues 124–135; that stretch reads AEDDDEDDDNSS. Ig-like C2-type domains follow at residues 154–242 and 251–353; these read PEKM…YQLD and PILQ…AWLT. Residues C174 and C226 are joined by a disulfide bond. A disulfide bridge connects residues C273 and C337. The chain crosses the membrane as a helical span at residues 372-393; that stretch reads EIIIYCTGAAFVSAMVVTIIIF. Residues 394-812 lie on the Cytoplasmic side of the membrane; the sequence is KMKHPSKKSD…KYSNGGLKKR (419 aa). Position 457 is a phosphotyrosine; by autocatalysis (Y457). In terms of domain architecture, Protein kinase spans 472-761; the sequence is LILGKPLGEG…LALSSNQEYL (290 aa). ATP-binding positions include 478 to 484, K508, 556 to 558, and N562; these read LGEGCFG and EYT. Phosphotyrosine; by autocatalysis is present on residues Y577 and Y579. Residue D617 is the Proton acceptor of the active site. Residues R621 and D635 each contribute to the ATP site. Phosphotyrosine; by autocatalysis occurs at positions 647, 648, 724, and 760. Residues 784–812 are disordered; sequence SGEDSMFSHDPLPDEPCLPKYSNGGLKKR.

The protein belongs to the protein kinase superfamily. Tyr protein kinase family. Fibroblast growth factor receptor subfamily. Monomer. Homodimer after ligand binding. Interacts with il17rd. Post-translationally, autophosphorylated. Binding of FGF family members together with heparan sulfate proteoglycan or heparin promotes receptor dimerization and autophosphorylation on tyrosine residues. Autophosphorylation occurs in trans between the two FGFR molecules present in the dimer and proceeds in a highly ordered manner. Phosphotyrosine residues provide docking sites for interacting proteins and so are crucial for FGFR1 function and its regulation. In terms of processing, ubiquitinated. FGFR1 is rapidly ubiquitinated after autophosphorylation, leading to internalization and degradation. N-glycosylated in the endoplasmic reticulum. The N-glycan chains undergo further maturation to an Endo H-resistant form in the Golgi apparatus.

The protein resides in the cell membrane. It localises to the nucleus. The protein localises to the cytoplasm. Its subcellular location is the cytosol. It is found in the cytoplasmic vesicle. The catalysed reaction is L-tyrosyl-[protein] + ATP = O-phospho-L-tyrosyl-[protein] + ADP + H(+). Present in an inactive conformation in the absence of bound ligand. Ligand binding leads to dimerization and activation by sequential autophosphorylation on tyrosine residues. Functionally, tyrosine-protein kinase that acts as a cell-surface receptor for fibroblast growth factors and plays an essential role in the regulation of embryonic development, cell proliferation, differentiation and migration. Required for normal mesoderm patterning and normal skeletogenesis. Phosphorylates PLCG1, FRS2, GAB1 and SHB. Ligand binding leads to the activation of several signaling cascades. Activation of PLCG1 leads to the production of the cellular signaling molecules diacylglycerol and inositol-1,4,5-trisphosphate. Phosphorylation of FRS2 triggers recruitment of GRB2, GAB1, PIK3R1 and SOS1, and mediates activation of RAS, MAPK1/ERK2, MAPK3/ERK1 and the MAP kinase signaling pathway, as well as of the AKT1 signaling pathway. Promotes phosphorylation of SHC1, STAT1 and PTPN11/SHP2. In the nucleus, enhances RPS6KA1 and CREB1 activity and contributes to the regulation of transcription. FGFR1 signaling is down-regulated by ubiquitination, internalization and degradation. This is Fibroblast growth factor receptor 1 (fgfr1) from Xenopus laevis (African clawed frog).